A 143-amino-acid chain; its full sequence is Large ribosomal subunit protein uL13 (143 aa).

It belongs to the universal ribosomal protein uL13 family. As to quaternary structure, part of the 50S ribosomal subunit.

Its function is as follows. This protein is one of the early assembly proteins of the 50S ribosomal subunit, although it is not seen to bind rRNA by itself. It is important during the early stages of 50S assembly. The protein is Large ribosomal subunit protein uL13 of Chloroflexus aggregans (strain MD-66 / DSM 9485).